We begin with the raw amino-acid sequence, 347 residues long: Selenide, water dikinase (347 aa).

C17 is a catalytic residue. ATP is bound by residues K20 and 48-50; that span reads TRD. D51 is a binding site for Mg(2+). ATP-binding positions include D68, D91, and 139 to 141; that span reads GHS. D91 lines the Mg(2+) pocket. Position 227 (D227) interacts with Mg(2+).

It belongs to the selenophosphate synthase 1 family. Class I subfamily. In terms of assembly, homodimer. Mg(2+) is required as a cofactor.

The catalysed reaction is hydrogenselenide + ATP + H2O = selenophosphate + AMP + phosphate + 2 H(+). Its function is as follows. Synthesizes selenophosphate from selenide and ATP. The protein is Selenide, water dikinase of Salmonella typhimurium (strain LT2 / SGSC1412 / ATCC 700720).